Reading from the N-terminus, the 861-residue chain is Leucine--tRNA ligase (861 aa).

The 'HIGH' region signature appears at 42–52 (PYPSGKLHMGH). The short motif at 620-624 (KMSKS) is the 'KMSKS' region element. Lys623 is a binding site for ATP.

This sequence belongs to the class-I aminoacyl-tRNA synthetase family.

The protein resides in the cytoplasm. It carries out the reaction tRNA(Leu) + L-leucine + ATP = L-leucyl-tRNA(Leu) + AMP + diphosphate. This Hahella chejuensis (strain KCTC 2396) protein is Leucine--tRNA ligase.